A 410-amino-acid chain; its full sequence is Phospho-N-acetylmuramoyl-pentapeptide-transferase (410 aa).

10 helical membrane-spanning segments follow: residues 23 to 43 (YITF…TIYG), 73 to 93 (TPTM…FLFA), 96 to 116 (HNIY…IGFV), 132 to 152 (GIFK…VLYF), 215 to 235 (WAWL…SNGA), 248 to 268 (TSAV…NIIF), 285 to 305 (VFIS…SFPA), 307 to 327 (VFMG…LAIA), 332 to 352 (ILIV…IIQV), and 387 to 407 (KIVT…IVTL).

Belongs to the glycosyltransferase 4 family. MraY subfamily. Mg(2+) serves as cofactor.

The protein resides in the cell inner membrane. The catalysed reaction is UDP-N-acetyl-alpha-D-muramoyl-L-alanyl-gamma-D-glutamyl-meso-2,6-diaminopimeloyl-D-alanyl-D-alanine + di-trans,octa-cis-undecaprenyl phosphate = di-trans,octa-cis-undecaprenyl diphospho-N-acetyl-alpha-D-muramoyl-L-alanyl-D-glutamyl-meso-2,6-diaminopimeloyl-D-alanyl-D-alanine + UMP. Its pathway is cell wall biogenesis; peptidoglycan biosynthesis. In terms of biological role, catalyzes the initial step of the lipid cycle reactions in the biosynthesis of the cell wall peptidoglycan: transfers peptidoglycan precursor phospho-MurNAc-pentapeptide from UDP-MurNAc-pentapeptide onto the lipid carrier undecaprenyl phosphate, yielding undecaprenyl-pyrophosphoryl-MurNAc-pentapeptide, known as lipid I. This Flavobacterium johnsoniae (strain ATCC 17061 / DSM 2064 / JCM 8514 / BCRC 14874 / CCUG 350202 / NBRC 14942 / NCIMB 11054 / UW101) (Cytophaga johnsonae) protein is Phospho-N-acetylmuramoyl-pentapeptide-transferase.